The chain runs to 471 residues: Mixed lineage kinase domain-like protein (471 aa).

Residues 1–149 are N-terminal bundle and brace (NBB); mediates INSP6 binding; the sequence is MENLKHIITL…DADEDRRAFQ (149 aa). A coiled-coil region spans residues 55 to 84; that stretch reads SEKLTTAMNRFKAALEEANGEIEKFSNRSN. Serine 125 carries the phosphoserine modification. Positions 139–180 form a coiled coil; that stretch reads QDADEDRRAFQMLRRDNEKIEASLRRLEINMKEIKETLRQYL. One can recognise a Protein kinase domain in the interval 194–469; it reads KEIKKEQLSG…DEILKKLSTF (276 aa). Residues 209 to 217 and lysine 230 each bind ATP; that span reads LRENEVSTL. Threonine 357 is subject to Phosphothreonine; by RIPK3. Phosphoserine; by RIPK3 occurs at positions 358 and 360.

This sequence belongs to the protein kinase superfamily. Homooligomer. Homotrimer; forms homotrimers on necroptosis induction. Upon TNF-induced necrosis, forms in complex with PGAM5, RIPK1 and RIPK3. Within this complex, may play a role in the proper targeting of RIPK1-RIPK3 to its downstream effector PGAM5. Interacts with RIPK3; the interaction is direct and promotes its phosphorylation and subsequent activation. Phosphorylation by RIPK3 induces a conformational switch that is required for necroptosis. It also induces homotrimerization and localization to the plasma membrane.

The protein resides in the cytoplasm. It is found in the cell membrane. The protein localises to the nucleus. With respect to regulation, activated via binding to highly phosphorylated inositol phosphates such as inositolhexakisphosphate (InsP6) which mediates the release of an N-terminal auto-inhibitory region. Activation requires not only RIPK3-dependent phosphorylation but also binding to highly phosphorylated inositol phosphates. Inhibited by necrosulfonamide, a specific inhibitor of necroptosis that targets Cys-86. Functionally, pseudokinase that plays a key role in TNF-induced necroptosis, a programmed cell death process. Does not have protein kinase activity. Activated following phosphorylation by RIPK3, leading to homotrimerization, localization to the plasma membrane and execution of programmed necrosis characterized by calcium influx and plasma membrane damage. In addition to TNF-induced necroptosis, necroptosis can also take place in the nucleus in response to orthomyxoviruses infection: following activation by ZBP1, MLKL is phosphorylated by RIPK3 in the nucleus, triggering disruption of the nuclear envelope and leakage of cellular DNA into the cytosol.following ZBP1 activation, which senses double-stranded Z-RNA structures, nuclear RIPK3 catalyzes phosphorylation and activation of MLKL, promoting disruption of the nuclear envelope and leakage of cellular DNA into the cytosol. Binds to highly phosphorylated inositol phosphates such as inositolhexakisphosphate (InsP6) which is essential for its necroptotic function. The protein is Mixed lineage kinase domain-like protein of Homo sapiens (Human).